Consider the following 406-residue polypeptide: Leu/Ile/Val-binding protein homolog 5 (406 aa).

The first 29 residues, 1-29 (MIGTRLPAWTRVLACGVAGLSLMTISAKA), serve as a signal peptide directing secretion.

This sequence belongs to the leucine-binding protein family.

Functionally, component of an amino-acid transport system. The chain is Leu/Ile/Val-binding protein homolog 5 from Brucella suis biovar 1 (strain 1330).